The chain runs to 205 residues: Small ribosomal subunit protein uS4 (205 aa).

A disordered region spans residues 1–46 (MSKRHSAKYKIDRRMGENLWGRPKSPVNQRSYGPGQHGQRRKQKVS). An S4 RNA-binding domain is found at 94-154 (SRLDAIVYRA…EKSRNMALVL (61 aa)).

This sequence belongs to the universal ribosomal protein uS4 family. As to quaternary structure, part of the 30S ribosomal subunit. Contacts protein S5. The interaction surface between S4 and S5 is involved in control of translational fidelity.

One of the primary rRNA binding proteins, it binds directly to 16S rRNA where it nucleates assembly of the body of the 30S subunit. In terms of biological role, with S5 and S12 plays an important role in translational accuracy. The protein is Small ribosomal subunit protein uS4 of Caulobacter sp. (strain K31).